The sequence spans 389 residues: Sinapine esterase (389 aa).

The signal sequence occupies residues 1–25; the sequence is MASSLKKLITSFLLFFFYTIIVASS. Ser-41 acts as the Nucleophile in catalysis. N-linked (GlcNAc...) asparagine glycosylation is found at Asn-104, Asn-137, and Asn-320. Catalysis depends on residues Asp-345 and His-348. 2 N-linked (GlcNAc...) asparagine glycosylation sites follow: Asn-372 and Asn-383.

The protein belongs to the 'GDSL' lipolytic enzyme family. In terms of tissue distribution, expressed in most tissues or organs of the mature seedlings. Not expressed in roots of mature seedlings.

The protein localises to the secreted. The enzyme catalyses O-sinapoylcholine + H2O = (E)-sinapate + choline + H(+). Inhibited by PMSF. Functionally, sinapine esterase that catalyzes that hydrolysis of sinapine, releasing choline and sinapate. Sinapine (O-sinapoylcholine) is the predominant phenolic compound in a complex group of sinapate esters in seeds of oilseed rape (B.napus). Sinapine has antinutritive activity and prevents the use of seed protein for food and feed. Shows broad substrate specificity towards various other choline esters, including phosphatidylcholine. The polypeptide is Sinapine esterase (Brassica napus (Rape)).